A 101-amino-acid polypeptide reads, in one-letter code: Small ribosomal subunit protein bS18c (101 aa).

It belongs to the bacterial ribosomal protein bS18 family. As to quaternary structure, part of the 30S ribosomal subunit.

Its subcellular location is the plastid. It localises to the chloroplast. This is Small ribosomal subunit protein bS18c (rps18) from Arabidopsis thaliana (Mouse-ear cress).